Here is a 1231-residue protein sequence, read N- to C-terminus: Cohesin subunit SA-2 (1231 aa).

Position 1 is an N-acetylmethionine (Met1). The interval 1-75 is disordered; the sequence is MIAAPEIPTD…GPNRMNGHHQ (75 aa). The segment covering 36-48 has biased composition (basic residues); that stretch reads KQGKGKTCKKGKK. Residues 293-378 enclose the SCD domain; the sequence is FVHRYRDAIA…SRFKDRIVSM (86 aa). Lys607 is subject to N6-acetyllysine. Phosphoserine is present on residues Ser1058, Ser1061, Ser1064, and Ser1065. Positions 1064 to 1083 are disordered; the sequence is SSRGSTVRSKKSKPSTGKRK. The segment covering 1071–1082 has biased composition (basic residues); sequence RSKKSKPSTGKR. Thr1112 is subject to Phosphothreonine. A phosphoserine mark is found at Ser1177 and Ser1178.

Belongs to the SCC3 family. Interacts directly with RAD21 in cohesin complex. Cohesin complexes are composed of a heterodimer between a SMC1 protein (SMC1A or SMC1B) and SMC3, which are attached via their hinge domain, and RAD21 which link them at their heads, and one STAG protein (STAG1, STAG2 or STAG3). In cohesin complexes, STAG2 is mutually exclusive with STAG1 and STAG3. Phosphorylated by PLK1. The large dissociation of cohesin from chromosome arms during prophase is partly due to its phosphorylation.

It localises to the nucleus. The protein localises to the chromosome. It is found in the centromere. Component of cohesin complex, a complex required for the cohesion of sister chromatids after DNA replication. The cohesin complex apparently forms a large proteinaceous ring within which sister chromatids can be trapped. At anaphase, the complex is cleaved and dissociates from chromatin, allowing sister chromatids to segregate. The cohesin complex may also play a role in spindle pole assembly during mitosis. This chain is Cohesin subunit SA-2 (STAG2), found in Homo sapiens (Human).